A 137-amino-acid polypeptide reads, in one-letter code: Ribosomal RNA small subunit methyltransferase G (137 aa).

Residues Gly-75, Phe-80, and 126-127 (AE) contribute to the S-adenosyl-L-methionine site.

The protein belongs to the methyltransferase superfamily. RNA methyltransferase RsmG family.

The protein resides in the cytoplasm. Specifically methylates the N7 position of a guanine in 16S rRNA. The protein is Ribosomal RNA small subunit methyltransferase G of Mycoplasma mycoides subsp. mycoides SC (strain CCUG 32753 / NCTC 10114 / PG1).